Here is a 185-residue protein sequence, read N- to C-terminus: Ovomucoid (185 aa).

3 consecutive Kazal-like domains span residues 1–63 (VEVD…ECRE), 64–128 (AVPM…ECRK), and 131–185 (AAVS…FGKC). Intrachain disulfides connect Cys5/Cys43, Cys22/Cys40, Cys30/Cys61, Cys69/Cys108, Cys86/Cys105, Cys94/Cys126, Cys137/Cys167, Cys145/Cys164, and Cys153/Cys185. An N-linked (GlcNAc...) asparagine glycan is attached at Asn174.

Its subcellular location is the secreted. The protein is Ovomucoid of Meleagris gallopavo (Wild turkey).